A 270-amino-acid chain; its full sequence is MTVNTKTYSERAETHASPVAQRLFRLMESKKTNLCASIDVDTTKEFLELIDKLGPYVCLIKTHIDIINDFSYESTIEPLLGLSRKHQFMIFEDRKFADIGNTVKKQYIGGVYKISSWADITNAHGVTGNGVVEGLKQGAKETTTNQEPRGLLMLAELSSVGSLAYGEYSQKTVEIAKSDKEFVVGFIAQRDMGGQEEGFDWLIMTPGVGLDDKGDGLGQQYRTVDEVVSTGTDIIIVGRGLFGKGRDPDIEGKRYRDAGWNAYLKKTGQL.

Substrate is bound by residues D39, 61-63, 93-102, Y221, and R239; these read KTH and DRKFADIGNT. K95 serves as the catalytic Proton donor.

This sequence belongs to the OMP decarboxylase family.

The catalysed reaction is orotidine 5'-phosphate + H(+) = UMP + CO2. It functions in the pathway pyrimidine metabolism; UMP biosynthesis via de novo pathway; UMP from orotate: step 2/2. This Candida albicans (strain SC5314 / ATCC MYA-2876) (Yeast) protein is Orotidine 5'-phosphate decarboxylase (URA3).